A 171-amino-acid chain; its full sequence is Lipoprotein signal peptidase (171 aa).

A run of 4 helical transmembrane segments spans residues 12–32 (LAWLWLSLLVLVIDQATKLYF), 42–62 (IVVIPDYFSWTLAYNTGAAFS), 70–90 (WQRWLFALIAVVVSAVLVVWL), and 96–116 (NETWLAVALALVLGGAIGNLY). Residues aspartate 126 and aspartate 145 contribute to the active site. Residues 137 to 157 (YFPAFNVADSAITVGAVMLAL) form a helical membrane-spanning segment.

It belongs to the peptidase A8 family.

The protein localises to the cell inner membrane. The catalysed reaction is Release of signal peptides from bacterial membrane prolipoproteins. Hydrolyzes -Xaa-Yaa-Zaa-|-(S,diacylglyceryl)Cys-, in which Xaa is hydrophobic (preferably Leu), and Yaa (Ala or Ser) and Zaa (Gly or Ala) have small, neutral side chains.. Its pathway is protein modification; lipoprotein biosynthesis (signal peptide cleavage). This protein specifically catalyzes the removal of signal peptides from prolipoproteins. In Pseudomonas putida (strain ATCC 47054 / DSM 6125 / CFBP 8728 / NCIMB 11950 / KT2440), this protein is Lipoprotein signal peptidase.